A 425-amino-acid chain; its full sequence is GTPase Obg (425 aa).

Positions 1–158 constitute an Obg domain; the sequence is MFRDSAKIYV…YSLILEMKMI (158 aa). The OBG-type G domain maps to 159 to 330; sequence ADVGLVGYPN…LLYAVSETLK (172 aa). Residues 165–172, 190–194, 212–215, 282–285, and 311–313 contribute to the GTP site; these read GYPNVGKS, FTTLV, DIPG, NKMD, and SAA. Mg(2+)-binding residues include S172 and T192. Residues 348 to 425 enclose the OCT domain; the sequence is YKVQEEKPFE…IYDTEFDYTR (78 aa).

It belongs to the TRAFAC class OBG-HflX-like GTPase superfamily. OBG GTPase family. Monomer. Mg(2+) serves as cofactor.

Its subcellular location is the cytoplasm. An essential GTPase which binds GTP, GDP and possibly (p)ppGpp with moderate affinity, with high nucleotide exchange rates and a fairly low GTP hydrolysis rate. Plays a role in control of the cell cycle, stress response, ribosome biogenesis and in those bacteria that undergo differentiation, in morphogenesis control. The polypeptide is GTPase Obg (Ruminiclostridium cellulolyticum (strain ATCC 35319 / DSM 5812 / JCM 6584 / H10) (Clostridium cellulolyticum)).